The sequence spans 1651 residues: Putative serine/threonine-protein kinase/receptor R818 (1651 aa).

The signal sequence occupies residues M1–G19. N-linked (GlcNAc...) asparagine; by host glycosylation is found at N111, N135, N190, N236, N275, N276, N287, N452, N455, N477, N495, N540, N596, and N722. A helical membrane pass occupies residues I749 to V769. One can recognise a Protein kinase 1 domain in the interval L793–I1057. Residues L799–V807 and K820 contribute to the ATP site. Catalysis depends on D915, which acts as the Proton acceptor. Residues I1089–T1115 form a disordered region. Residues G1100 to T1115 are compositionally biased toward low complexity. Residues I1135–T1278 enclose the Guanylate cyclase domain. In terms of domain architecture, Protein kinase 2 spans I1394–L1645. ATP contacts are provided by residues I1400–V1408 and K1421. D1515 serves as the catalytic Proton acceptor.

It is found in the membrane. The enzyme catalyses L-seryl-[protein] + ATP = O-phospho-L-seryl-[protein] + ADP + H(+). It catalyses the reaction L-threonyl-[protein] + ATP = O-phospho-L-threonyl-[protein] + ADP + H(+). This chain is Putative serine/threonine-protein kinase/receptor R818, found in Acanthamoeba polyphaga mimivirus (APMV).